A 472-amino-acid polypeptide reads, in one-letter code: Siroheme synthase (472 aa).

Residues 1–207 form a precorrin-2 dehydrogenase /sirohydrochlorin ferrochelatase region; sequence MNFLPIFLDI…GKDQAAKAWL (207 aa). NAD(+)-binding positions include 22–23 and 43–44; these read EV and PR. Serine 132 carries the post-translational modification Phosphoserine. A uroporphyrinogen-III C-methyltransferase region spans residues 221-472; sequence GEVYLVGAGP…QPEGNLPGAE (252 aa). Residue proline 230 coordinates S-adenosyl-L-methionine. The Proton acceptor role is filled by aspartate 253. Lysine 275 functions as the Proton donor in the catalytic mechanism. S-adenosyl-L-methionine is bound by residues 306–308, isoleucine 311, 336–337, methionine 388, and glycine 417; these read GGD and TA.

In the N-terminal section; belongs to the precorrin-2 dehydrogenase / sirohydrochlorin ferrochelatase family. The protein in the C-terminal section; belongs to the precorrin methyltransferase family.

The enzyme catalyses uroporphyrinogen III + 2 S-adenosyl-L-methionine = precorrin-2 + 2 S-adenosyl-L-homocysteine + H(+). It carries out the reaction precorrin-2 + NAD(+) = sirohydrochlorin + NADH + 2 H(+). The catalysed reaction is siroheme + 2 H(+) = sirohydrochlorin + Fe(2+). It participates in cofactor biosynthesis; adenosylcobalamin biosynthesis; precorrin-2 from uroporphyrinogen III: step 1/1. The protein operates within cofactor biosynthesis; adenosylcobalamin biosynthesis; sirohydrochlorin from precorrin-2: step 1/1. Its pathway is porphyrin-containing compound metabolism; siroheme biosynthesis; precorrin-2 from uroporphyrinogen III: step 1/1. It functions in the pathway porphyrin-containing compound metabolism; siroheme biosynthesis; siroheme from sirohydrochlorin: step 1/1. It participates in porphyrin-containing compound metabolism; siroheme biosynthesis; sirohydrochlorin from precorrin-2: step 1/1. In terms of biological role, multifunctional enzyme that catalyzes the SAM-dependent methylations of uroporphyrinogen III at position C-2 and C-7 to form precorrin-2 via precorrin-1. Then it catalyzes the NAD-dependent ring dehydrogenation of precorrin-2 to yield sirohydrochlorin. Finally, it catalyzes the ferrochelation of sirohydrochlorin to yield siroheme. The polypeptide is Siroheme synthase (Nitrosospira multiformis (strain ATCC 25196 / NCIMB 11849 / C 71)).